A 152-amino-acid chain; its full sequence is MFP1 attachment factor 1 (152 aa).

Disordered stretches follow at residues 1–33 (MAEIDSAQSQETVTQETQNKPMTTSFSIWPPTQ) and 107–152 (DTVK…ETEP). The WPP stretch occupies residues 12–115 (TVTQETQNKP…IDTVKSRSAP (104 aa)). The segment covering 134–152 (EPSSASGLTGEVSSVETEP) has biased composition (polar residues).

As to quaternary structure, interacts with WAP through its WPP domain. Binds to MFP1 and FPP proteins. As to expression, expressed in young tomato leaves, young fruits, and flowers (at protein level).

It localises to the nucleus envelope. Its subcellular location is the cytoplasm. It is found in the golgi apparatus. The protein localises to the nucleus. The protein resides in the nucleus matrix. This Solanum lycopersicum (Tomato) protein is MFP1 attachment factor 1 (MAF1).